Consider the following 165-residue polypeptide: Large ribosomal subunit protein uL10 (165 aa).

It belongs to the universal ribosomal protein uL10 family. As to quaternary structure, part of the ribosomal stalk of the 50S ribosomal subunit. The N-terminus interacts with L11 and the large rRNA to form the base of the stalk. The C-terminus forms an elongated spine to which L12 dimers bind in a sequential fashion forming a multimeric L10(L12)X complex.

Functionally, forms part of the ribosomal stalk, playing a central role in the interaction of the ribosome with GTP-bound translation factors. The protein is Large ribosomal subunit protein uL10 of Mycoplasma mycoides subsp. mycoides SC (strain CCUG 32753 / NCTC 10114 / PG1).